A 214-amino-acid chain; its full sequence is DELTA-actitoxin-Aeq1b (214 aa).

The N-terminal stretch at 1-19 is a signal peptide; it reads MSRLIIVFIVVTMICAATA. Positions 20 to 35 are excised as a propeptide; that stretch reads LSSKKSINEDEKDEKR. The segment at 38 to 47 is plays an important role in the hemolytic activity; the sequence is AVAGAVIEGA. Residues 46–65 form an N-terminal region region; the sequence is GATLTFNVLQTVLKALGDIS. Residues Ser-89, Val-122, Ser-140, Pro-142, Tyr-168, Tyr-172, and Tyr-173 each contribute to the phosphocholine site. Residues 140–155 form a trp-rich region, which is important for the binding to lipid membrane region; sequence SIPFDYNLYSNWWNVK. The Cell attachment site, crucial for protein stability signature appears at 179–181; that stretch reads RGD.

Belongs to the actinoporin family. Sea anemone subfamily. In terms of assembly, octamer or nonamer in membranes. Monomer in the soluble state.

Its subcellular location is the secreted. It localises to the nematocyst. The protein resides in the target cell membrane. Pore-forming protein that forms cations-selective hydrophilic pores of around 1 nm and causes cytolysis. Pore formation is a multi-step process that involves specific recognition of membrane sphingomyelin (but neither cholesterol nor phosphatidylcholine) using aromatic rich region and adjacent phosphocholine (POC) binding site, firm binding to the membrane (mainly driven by hydrophobic interactions) accompanied by the transfer of the N-terminal region to the lipid-water interface and finally pore formation after oligomerization of monomers. The protein is DELTA-actitoxin-Aeq1b of Actinia equina (Beadlet anemone).